Here is a 612-residue protein sequence, read N- to C-terminus: ETS-related transcription factor Elf-1 (612 aa).

4 positions are modified to phosphoserine: S110, S163, S167, and S168. Residues 156–169 (VQETNADSPGASSP) are compositionally biased toward polar residues. The tract at residues 156-199 (VQETNADSPGASSPEQRKRKKGRKTKPPRPDSPTTTPNISVKKK) is disordered. Over residues 172 to 182 (RKRKKGRKTKP) the composition is skewed to basic residues. S187 is modified (phosphoserine). Residue T190 is modified to Phosphothreonine. A DNA-binding region (ETS) is located at residues 208–290 (IYLWEFLLAL…EGQRLVYQFK (83 aa)). Positions 300-361 (DDEDPSSSIE…AANPKDPVEV (62 aa)) are disordered. Residues 305–322 (SSSIESSDQSLSSTTASS) are compositionally biased toward low complexity. The segment covering 323–335 (RNQANRSRVSSSP) has biased composition (polar residues). S431 is modified (phosphoserine). Positions 562–577 (EVEKKAEDDLNEDAEK) are enriched in basic and acidic residues. The tract at residues 562–586 (EVEKKAEDDLNEDAEKSAQQPQPYV) is disordered.

Belongs to the ETS family. As to quaternary structure, binds to the underphosphorylated form of RB. May interact with other transcription factors in order to regulate specific genes. Interacts with RUNX1. Interacts with SP1; the interaction is inhibited by glycosylation of SP1. In terms of tissue distribution, predominantly found in hematopoietic cells. Detected in other cell types such as fibroblasts.

It is found in the nucleus. Its function is as follows. Transcription factor that activates the LYN and BLK promoters. This is ETS-related transcription factor Elf-1 (Elf1) from Mus musculus (Mouse).